The sequence spans 767 residues: Probable beta-D-xylosidase 7 (767 aa).

A signal peptide spans 1–19; the sequence is MAKQLLLLLLLFIVHGVES. N-linked (GlcNAc...) asparagine glycosylation occurs at N100. Residue D292 is part of the active site. The N-linked (GlcNAc...) asparagine glycan is linked to N643.

It belongs to the glycosyl hydrolase 3 family.

It is found in the secreted. The protein resides in the extracellular space. The protein localises to the extracellular matrix. This is Probable beta-D-xylosidase 7 (BXL7) from Arabidopsis thaliana (Mouse-ear cress).